Here is a 112-residue protein sequence, read N- to C-terminus: MKGTKLAVVVGMTVAAVSLAAPAQADDYDAPFNNTIHRFGIYGPQDYNAWLAKISCERLSRGVDGDAYKSATFLQRNLPRGTTQGQAFQFLGAAIDHYCPEHVGVLQRAGTR.

The N-terminal stretch at 1-25 (MKGTKLAVVVGMTVAAVSLAAPAQA) is a signal peptide.

This is an uncharacterized protein from Mycobacterium tuberculosis (strain CDC 1551 / Oshkosh).